The primary structure comprises 174 residues: Ribosome maturation factor RimP (174 aa).

It belongs to the RimP family.

Its subcellular location is the cytoplasm. In terms of biological role, required for maturation of 30S ribosomal subunits. This chain is Ribosome maturation factor RimP, found in Acinetobacter baumannii (strain SDF).